The sequence spans 285 residues: Formamidopyrimidine-DNA glycosylase (285 aa).

Catalysis depends on Pro-2, which acts as the Schiff-base intermediate with DNA. Catalysis depends on Glu-3, which acts as the Proton donor. The active-site Proton donor; for beta-elimination activity is Lys-61. 3 residues coordinate DNA: His-102, Arg-121, and Lys-163. An FPG-type zinc finger spans residues Asn-249–Lys-283. The Proton donor; for delta-elimination activity role is filled by Arg-273.

It belongs to the FPG family. As to quaternary structure, monomer. It depends on Zn(2+) as a cofactor.

The catalysed reaction is Hydrolysis of DNA containing ring-opened 7-methylguanine residues, releasing 2,6-diamino-4-hydroxy-5-(N-methyl)formamidopyrimidine.. It carries out the reaction 2'-deoxyribonucleotide-(2'-deoxyribose 5'-phosphate)-2'-deoxyribonucleotide-DNA = a 3'-end 2'-deoxyribonucleotide-(2,3-dehydro-2,3-deoxyribose 5'-phosphate)-DNA + a 5'-end 5'-phospho-2'-deoxyribonucleoside-DNA + H(+). Functionally, involved in base excision repair of DNA damaged by oxidation or by mutagenic agents. Acts as a DNA glycosylase that recognizes and removes damaged bases. Has a preference for oxidized purines, such as 7,8-dihydro-8-oxoguanine (8-oxoG). Has AP (apurinic/apyrimidinic) lyase activity and introduces nicks in the DNA strand. Cleaves the DNA backbone by beta-delta elimination to generate a single-strand break at the site of the removed base with both 3'- and 5'-phosphates. This is Formamidopyrimidine-DNA glycosylase from Corynebacterium efficiens (strain DSM 44549 / YS-314 / AJ 12310 / JCM 11189 / NBRC 100395).